A 418-amino-acid polypeptide reads, in one-letter code: D-amino acid dehydrogenase (418 aa).

3–17 is an FAD binding site; that stretch reads VLILGSGVVGVATAY.

The protein belongs to the DadA oxidoreductase family. It depends on FAD as a cofactor.

It carries out the reaction a D-alpha-amino acid + A + H2O = a 2-oxocarboxylate + AH2 + NH4(+). It participates in amino-acid degradation; D-alanine degradation; NH(3) and pyruvate from D-alanine: step 1/1. Functionally, oxidative deamination of D-amino acids. The polypeptide is D-amino acid dehydrogenase (Granulibacter bethesdensis (strain ATCC BAA-1260 / CGDNIH1)).